The chain runs to 437 residues: Palmitoyltransferase PFA4 (437 aa).

Residues 1–12 lie on the Cytoplasmic side of the membrane; that stretch reads MAGLNDVPFIKG. A helical transmembrane segment spans residues 13-33; that stretch reads LAVPSVCALIIFLGYASQFLF. Topologically, residues 34–48 are lumenal; it reads NYSTTLEPGPPTRRE. The helical transmembrane segment at 49 to 69 threads the bilayer; it reads TIIFNGLLLVLWITYYRTVAT. Over 70–130 the chain is Cytoplasmic; it reads DPGRYIFKDR…RNCVSMTTFP (61 aa). The 51-residue stretch at 87–137 folds into the DHHC domain; that stretch reads RWCNKCAAPKPPRAHHCRHCARCVPRMDHHCPWTRNCVSMTTFPHFLRFLI. The S-palmitoyl cysteine intermediate role is filled by Cys117. The chain crosses the membrane as a helical span at residues 131-151; the sequence is HFLRFLIYTNMSLWMLGYFLW. At 152 to 173 the chain is on the lumenal side; the sequence is QRFSKIWEHRRLPAYLGPSFYG. A helical membrane pass occupies residues 174–194; that stretch reads LICLSLISIVNFVTTVALGIM. Residues 195–437 lie on the Cytoplasmic side of the membrane; sequence LINTVKSWVF…KILKKDGLDD (243 aa). The tract at residues 377 to 419 is disordered; that stretch reads LDQGLGWVNSDGDRLRDYGVDEEASEPEGVNDDDDDDDDDDVP. Residues 396-419 are compositionally biased toward acidic residues; it reads VDEEASEPEGVNDDDDDDDDDDVP.

It belongs to the DHHC palmitoyltransferase family. PFA4 subfamily.

It is found in the endoplasmic reticulum membrane. It catalyses the reaction L-cysteinyl-[protein] + hexadecanoyl-CoA = S-hexadecanoyl-L-cysteinyl-[protein] + CoA. Functionally, mediates the reversible addition of palmitate to target proteins, thereby regulating their membrane association and biological function. In Gibberella zeae (strain ATCC MYA-4620 / CBS 123657 / FGSC 9075 / NRRL 31084 / PH-1) (Wheat head blight fungus), this protein is Palmitoyltransferase PFA4.